The chain runs to 174 residues: Shikimate kinase (174 aa).

Residue 15 to 20 (GTGKST) participates in ATP binding. S19 serves as a coordination point for Mg(2+). D37, R61, and G82 together coordinate substrate. R120 provides a ligand contact to ATP. R138 is a substrate binding site.

The protein belongs to the shikimate kinase family. In terms of assembly, monomer. Mg(2+) is required as a cofactor.

The protein localises to the cytoplasm. It carries out the reaction shikimate + ATP = 3-phosphoshikimate + ADP + H(+). The protein operates within metabolic intermediate biosynthesis; chorismate biosynthesis; chorismate from D-erythrose 4-phosphate and phosphoenolpyruvate: step 5/7. Functionally, catalyzes the specific phosphorylation of the 3-hydroxyl group of shikimic acid using ATP as a cosubstrate. The polypeptide is Shikimate kinase (Staphylococcus aureus (strain Mu3 / ATCC 700698)).